Consider the following 228-residue polypeptide: HTH-type transcriptional activator FasR (228 aa).

Residues 1-39 form a disordered region; that stretch reads MSDLAKTAQRRALRSSGSARPDEDVPAPNRRGNRLPRDE. The HTH tetR-type domain maps to 38–98; the sequence is DERRGQLLVV…AVLHRHVENL (61 aa). Positions 61-80 form a DNA-binding region, H-T-H motif; sequence GMDEIADRAGVSKPVLYQHF.

Homodimer.

Its activity is regulated as follows. FasR:DNA binding is regulated by long-chain acyl-CoAs (C14- to C26-CoA), which act as effector molecules that modulate the affinity of FasR for its DNA binding sequences and therefore modulate the expression of the essential fas-acpS operon. FasR activity is not affected by mycolic acid biosynthesis intermediates. Transcriptional activator that plays a central role in sensing mycobacterial long-chain fatty acids and regulating lipid biosynthesis. Activates the expression of the genes encoding the fatty acid synthase (fas) and the 4-phosphopantetheinyl transferase (acpS), whose products are involved in the fatty acid and mycolic acid biosynthesis. Specifically binds to three conserved operator sequences present in the fas-acpS promoter region. Not essential for M.tuberculosis viability, although it is required for the optimal growth in vitro and for virulence in macrophages and in a mouse model of infection. This Mycobacterium tuberculosis (strain ATCC 25618 / H37Rv) protein is HTH-type transcriptional activator FasR.